We begin with the raw amino-acid sequence, 338 residues long: Lipoate-protein ligase A (338 aa).

In terms of domain architecture, BPL/LPL catalytic spans 29–216 (PADQRVLFLW…AYCEHYQQQV (188 aa)). ATP is bound by residues arginine 71, 76-79 (GAVF), and lysine 134. Lysine 134 lines the (R)-lipoate pocket.

Belongs to the LplA family. As to quaternary structure, monomer.

The protein resides in the cytoplasm. The enzyme catalyses L-lysyl-[lipoyl-carrier protein] + (R)-lipoate + ATP = N(6)-[(R)-lipoyl]-L-lysyl-[lipoyl-carrier protein] + AMP + diphosphate + H(+). It participates in protein modification; protein lipoylation via exogenous pathway; protein N(6)-(lipoyl)lysine from lipoate: step 1/2. Its pathway is protein modification; protein lipoylation via exogenous pathway; protein N(6)-(lipoyl)lysine from lipoate: step 2/2. Catalyzes both the ATP-dependent activation of exogenously supplied lipoate to lipoyl-AMP and the transfer of the activated lipoyl onto the lipoyl domains of lipoate-dependent enzymes. The chain is Lipoate-protein ligase A from Vibrio cholerae serotype O1 (strain ATCC 39541 / Classical Ogawa 395 / O395).